The sequence spans 235 residues: Protein GrpE (235 aa).

2 stretches are compositionally biased toward basic and acidic residues: residues 1–16 (MENKNQKHNNEFHEKN) and 24–35 (NNVKKENLHEDQ). The interval 1–51 (MENKNQKHNNEFHEKNQQSQKDNNNVKKENLHEDQSDLNDANFDDGGKKNK) is disordered.

The protein belongs to the GrpE family. Homodimer.

The protein resides in the cytoplasm. In terms of biological role, participates actively in the response to hyperosmotic and heat shock by preventing the aggregation of stress-denatured proteins, in association with DnaK and GrpE. It is the nucleotide exchange factor for DnaK and may function as a thermosensor. Unfolded proteins bind initially to DnaJ; upon interaction with the DnaJ-bound protein, DnaK hydrolyzes its bound ATP, resulting in the formation of a stable complex. GrpE releases ADP from DnaK; ATP binding to DnaK triggers the release of the substrate protein, thus completing the reaction cycle. Several rounds of ATP-dependent interactions between DnaJ, DnaK and GrpE are required for fully efficient folding. This chain is Protein GrpE, found in Malacoplasma penetrans (strain HF-2) (Mycoplasma penetrans).